The following is a 156-amino-acid chain: Small ribosomal subunit protein uS7 (156 aa).

This sequence belongs to the universal ribosomal protein uS7 family. Part of the 30S ribosomal subunit. Contacts proteins S9 and S11.

One of the primary rRNA binding proteins, it binds directly to 16S rRNA where it nucleates assembly of the head domain of the 30S subunit. Is located at the subunit interface close to the decoding center, probably blocks exit of the E-site tRNA. This is Small ribosomal subunit protein uS7 from Bordetella petrii (strain ATCC BAA-461 / DSM 12804 / CCUG 43448).